Here is a 321-residue protein sequence, read N- to C-terminus: Cyclic AMP-AMP-AMP synthase (321 aa).

Lysine 63 is a binding site for ATP. Positions 72 and 74 each coordinate Mg(2+). ATP is bound by residues aspartate 74, histidine 162, lysine 185, 201–203, and asparagine 270; that span reads KSF.

It belongs to the CD-NTase family. A01 subfamily. In terms of assembly, forms complexes with Cap7 with 1:1 and 2:2 stoichimetry, and a 1:1:6 CdnC:Cap7:Cap6 complex. The cofactor is Mg(2+).

The enzyme catalyses 3 ATP = 3',3',3'-c-tri-AMP + 3 diphosphate. The catalysed reaction is 2 ATP = 3',3'-c-di-AMP + 2 diphosphate. With respect to regulation, the 2:2 CdnC:Cap7 (Cap7 is also called HORMA) complex is activated for cAAA synthesis by long dsDNA, but not 40 bp dsDNA or ssDNA; the 1:1 complex is inactive in vitro. The 2:2:DNA complex is catalytically disassembled and inactivated by Cap6 (also called Trip13). Its function is as follows. Cyclic nucleotide synthase (second messenger synthase) of a CBASS antivirus system. CBASS (cyclic oligonucleotide-based antiphage signaling system) provides immunity against bacteriophage. The CD-NTase protein synthesizes cyclic nucleotides in response to infection; these serve as specific second messenger signals. The signals activate a diverse range of effectors, leading to bacterial cell death and thus abortive phage infection. A type III-C(AAA) CBASS system. Functionally, cyclic nucleotide synthase that upon activation catalyzes the synthesis of 3',3',3'-cyclic AMP-AMP-AMP (3',3',3'-c-tri-AMP or cAAA) as the major product, and 3',3'-c-di-AMP as a minor product. Cannot use GTP as a substrate. Protects E.coli strain JP313 against bacteriophage lambda cI- infection. When the cdnC-cap7-cap6-nucC operon is transformed into a susceptible strain it confers bacteriophage immunity. Mutations in the sensor (Cap7 also called HORMA) or effector proteins (CdnC, NucC) but not the disassembly protein (Cap6 also called Trip13) no longer confer immunity. The presence of the intact operon leads to culture collapse and cell death, which occurs before the phage has finished its replication cycle, thus protecting non-infected bacteria by aborting the phage infection and preventing its propagation. This is Cyclic AMP-AMP-AMP synthase from Escherichia coli (strain MS 115-1).